A 1020-amino-acid chain; its full sequence is Mediator of RNA polymerase II transcription subunit 16 (1020 aa).

Belongs to the Mediator complex subunit 16 family. As to quaternary structure, component of the Mediator complex.

It localises to the nucleus. Component of the Mediator complex, a coactivator involved in the regulated transcription of nearly all RNA polymerase II-dependent genes. Mediator functions as a bridge to convey information from gene-specific regulatory proteins to the basal RNA polymerase II transcription machinery. Mediator is recruited to promoters by direct interactions with regulatory proteins and serves as a scaffold for the assembly of a functional preinitiation complex with RNA polymerase II and the general transcription factors. This Scheffersomyces stipitis (strain ATCC 58785 / CBS 6054 / NBRC 10063 / NRRL Y-11545) (Yeast) protein is Mediator of RNA polymerase II transcription subunit 16 (SIN4).